Here is a 227-residue protein sequence, read N- to C-terminus: uncharacterized protein (227 aa).

This is an uncharacterized protein from Ictalurid herpesvirus 1 (strain Auburn) (IcHV-1).